The following is a 142-amino-acid chain: Transcriptional regulator MraZ (142 aa).

2 SpoVT-AbrB domains span residues 5-51 and 77-120; these read ASSL…PRPE and AMDV…DKAT.

This sequence belongs to the MraZ family. In terms of assembly, forms oligomers.

Its subcellular location is the cytoplasm. It localises to the nucleoid. In Acidovorax ebreus (strain TPSY) (Diaphorobacter sp. (strain TPSY)), this protein is Transcriptional regulator MraZ.